Here is a 357-residue protein sequence, read N- to C-terminus: Acyl-coenzyme A diphosphatase NUDT19 (357 aa).

The Nudix hydrolase domain maps to 10 to 242; that stretch reads AATVMLAAGW…IWLAPPQFYE (233 aa). The disordered stretch occupies residues 72–94; it reads PRFGLGPEPPRQPPFPGLSHGDA. A compositionally biased stretch (pro residues) spans 78 to 87; the sequence is PEPPRQPPFP. A Nudix box motif is present at residues 97–118; the sequence is AALPDDVALRICAIRETFEEAG. 2 residues coordinate Mg(2+): Glu112 and Glu116. At Lys300 the chain carries N6-succinyllysine. The Microbody targeting signal motif lies at 355–357; sequence AHL.

It belongs to the Nudix hydrolase family. Monomer. Mg(2+) serves as cofactor. The cofactor is Mn(2+).

It localises to the peroxisome. It catalyses the reaction an acyl-CoA + H2O = an acyl-4'-phosphopantetheine + adenosine 3',5'-bisphosphate + 2 H(+). The enzyme catalyses CoA + H2O = (R)-4'-phosphopantetheine + adenosine 3',5'-bisphosphate + 2 H(+). It carries out the reaction hexanoyl-CoA + H2O = hexanoyl-4'-phosphopantetheine + adenosine 3',5'-bisphosphate + 2 H(+). The catalysed reaction is octanoyl-CoA + H2O = S-octanoyl-4'-phosphopantetheine + adenosine 3',5'-bisphosphate + 2 H(+). It catalyses the reaction butanoyl-CoA + H2O = S-butanoyl-4'-phosphopantetheine + adenosine 3',5'-bisphosphate + 2 H(+). The enzyme catalyses propanoyl-CoA + H2O = propanoyl-4'-phosphopantetheine + adenosine 3',5'-bisphosphate + 2 H(+). It carries out the reaction malonyl-CoA + H2O = malonyl-4'-phosphopantetheine + adenosine 3',5'-bisphosphate + 2 H(+). The catalysed reaction is succinyl-CoA + H2O = succinyl-4'-phosphopantetheine + adenosine 3',5'-bisphosphate + 2 H(+). It catalyses the reaction choloyl-CoA + H2O = S-choloyl-4'-phosphopantetheine + adenosine 3',5'-bisphosphate + 2 H(+). The enzyme catalyses 4,8-dimethylnonanoyl-CoA + H2O = S-(4,8-dimethylnonanoyl)-4'-phosphopantetheine + adenosine 3',5'-bisphosphate + 2 H(+). It carries out the reaction (9Z,12Z,15Z)-octadecatrienoyl-CoA + H2O = S-(9Z,12Z,15Z-octadecatrienoyl)-4'-phosphopantetheine + adenosine 3',5'-bisphosphate + 2 H(+). The catalysed reaction is (9Z,12Z)-octadecadienoyl-CoA + H2O = S-(9Z,12Z-octadecadienoyl)-4'-phosphopantetheine + adenosine 3',5'-bisphosphate + 2 H(+). It catalyses the reaction (9Z)-hexadecenoyl-CoA + H2O = S-(9Z-hexadecenoyl)-4'-phosphopantetheine + adenosine 3',5'-bisphosphate + 2 H(+). The enzyme catalyses (9Z)-tetradecenoyl-CoA + H2O = S-(9Z-tetradecenoyl)-4'-phosphopantetheine + adenosine 3',5'-bisphosphate + 2 H(+). It carries out the reaction (6Z)-octenoyl-CoA + H2O = S-(6Z-octenoyl)-4'-phosphopantetheine + adenosine 3',5'-bisphosphate + 2 H(+). The catalysed reaction is hexadecanoyl-CoA + H2O = S-hexadecanoyl-4'-phosphopantetheine + adenosine 3',5'-bisphosphate + 2 H(+). It catalyses the reaction tetradecanoyl-CoA + H2O = tetradecanoyl-4'-phosphopantetheine + adenosine 3',5'-bisphosphate + 2 H(+). The enzyme catalyses dodecanoyl-CoA + H2O = S-dodecanoyl-4'-phosphopantetheine + adenosine 3',5'-bisphosphate + 2 H(+). It carries out the reaction a 5'-end CoA-ribonucleoside in mRNA + H2O = a 5'-end phospho-adenosine-phospho-ribonucleoside in mRNA + (R)-4'-phosphopantetheine + 2 H(+). In terms of biological role, fatty acyl-coenzyme A (CoA) diphosphatase that hydrolyzes fatty acyl-CoA to yield acyl-4'-phosphopantetheine and adenosine 3',5'-bisphosphate. Mediates the hydrolysis of a wide range of CoA esters, including choloyl-CoA and branched-chain fatty-acyl-CoA esters and at low substrate concentrations medium and long-chain fatty-acyl-CoA esters are the primary substrates. Highest activity seen with medium-chain acyl-CoA esters and higher rates of activity seen with the unsaturated acyl-CoA esters compared with the saturated esters. Exhibits decapping activity towards dpCoA-capped RNAs in vitro. This chain is Acyl-coenzyme A diphosphatase NUDT19 (Nudt19), found in Mus caroli (Ryukyu mouse).